A 364-amino-acid polypeptide reads, in one-letter code: 3-isopropylmalate dehydrogenase (364 aa).

NAD(+) is bound at residue 79-90 (GPKWGTGSVRPE). Residues Arg97, Arg107, Arg136, and Asp225 each contribute to the substrate site. Positions 225, 250, and 254 each coordinate Mg(2+). 289–300 (GSAPDLPKNKVN) is an NAD(+) binding site.

This sequence belongs to the isocitrate and isopropylmalate dehydrogenases family. Homodimer. The cofactor is Mg(2+). Mn(2+) serves as cofactor.

It is found in the cytoplasm. The catalysed reaction is (2R,3S)-3-isopropylmalate + NAD(+) = 4-methyl-2-oxopentanoate + CO2 + NADH. It functions in the pathway amino-acid biosynthesis; L-leucine biosynthesis; L-leucine from 3-methyl-2-oxobutanoate: step 3/4. Its function is as follows. Catalyzes the oxidation of 3-carboxy-2-hydroxy-4-methylpentanoate (3-isopropylmalate) to 3-carboxy-4-methyl-2-oxopentanoate. The product decarboxylates to 4-methyl-2 oxopentanoate. The sequence is that of 3-isopropylmalate dehydrogenase (LEU2) from Saccharomyces cerevisiae (strain ATCC 204508 / S288c) (Baker's yeast).